We begin with the raw amino-acid sequence, 470 residues long: Cytochrome P450 monooxygenase FUM2 (470 aa).

Cysteine 414 lines the heme pocket.

This sequence belongs to the cytochrome P450 family. Requires heme as cofactor.

The protein operates within mycotoxin biosynthesis. Functionally, cytochrome P450 monooxygenase; part of the gene cluster that mediates the biosynthesis of fumonisins B1 (FB1), B2 (FB2), B3 (FB3), and B4 (FB4), which are carcinogenic mycotoxins. Within the pathway, FUM2 performs the C-10 hydroxylation present in FB2 and FB4 and which occurs early in the biosynthesis. The biosynthesis starts with the FUM1-catalyzed carbon chain assembly from one molecule of acetyl-CoA, eight molecules of malonyl-CoA, and two molecules of methionine (in S-adenosyl form). The C18 polyketide chain is released from the enzyme by a nucleophilic attack of a carbanion, which is derived from R-carbon of alanine by decarboxylation, on the carbonyl carbon of polyketide acyl chain. This step is catalyzed by the pyridoxal 5'-phosphate-dependent aminoacyl transferase FUM8. The resultant 3-keto intermediate is then stereospecifically reduced to a 3-hydroxyl product by reductase FUM13. Subsequent oxidations at C-10 by the cytochrome P450 monooxygenase FUM2, C-14 and C-15 by FUM6, FUM12 or FUM15, tricarballylic esterification of the hydroxyl groups on C-14 and C-15 by acyltransferase FUM14, and C-5 hydroxylation by 2-keto-glutarate-dependent dioxygenase FUM3 furnish the biosynthesis of fumonisins. The tricarballylic moieties are most likely derived from the citric acid cycle, and their addition to the carbon backbone may involve FUM7, FUM10, FUM11 and FUM14. The chain is Cytochrome P450 monooxygenase FUM2 from Gibberella moniliformis (strain M3125 / FGSC 7600) (Maize ear and stalk rot fungus).